The sequence spans 1202 residues: Protein jagged-2 (1202 aa).

The Extracellular segment spans residues 1–1037 (GACCDGDGRT…ETVVMGGSST (1037 aa)). Asn-107 carries an N-linked (GlcNAc...) asparagine glycan. Residues 150 to 194 (VRCDENYYSATCNKFCRPRNDFFGHYTCDQYGNKACMDGWMGKEC) enclose the DSL domain. Disulfide bonds link Cys-152/Cys-161, Cys-165/Cys-177, Cys-185/Cys-194, Cys-199/Cys-210, Cys-203/Cys-216, Cys-218/Cys-227, Cys-230/Cys-241, Cys-236/Cys-247, Cys-249/Cys-258, Cys-265/Cys-277, Cys-271/Cys-287, Cys-289/Cys-298, Cys-305/Cys-316, Cys-310/Cys-325, Cys-327/Cys-336, Cys-343/Cys-354, Cys-348/Cys-363, Cys-365/Cys-374, Cys-381/Cys-392, Cys-386/Cys-401, Cys-403/Cys-412, Cys-419/Cys-429, Cys-423/Cys-438, Cys-440/Cys-449, Cys-456/Cys-467, Cys-461/Cys-476, Cys-478/Cys-487, Cys-495/Cys-506, Cys-500/Cys-515, Cys-517/Cys-526, Cys-544/Cys-567, Cys-561/Cys-577, Cys-579/Cys-588, Cys-595/Cys-606, Cys-600/Cys-615, Cys-617/Cys-626, Cys-633/Cys-644, Cys-638/Cys-653, Cys-655/Cys-664, Cys-671/Cys-682, Cys-676/Cys-691, and Cys-693/Cys-702. The EGF-like 1 domain occupies 195–228 (KEAVCKQGCNLLHGGCTVPGECRCSYGWQGKFCD). In terms of domain architecture, EGF-like 2; atypical spans 229 to 259 (ECVPYPGCVHGSCVEPWHCDCETNWGGLLCD). 2 consecutive EGF-like domains span residues 261 to 299 (DLNY…KNCE) and 301 to 337 (AEHA…PTCA). An EGF-like 5; calcium-binding domain is found at 339 to 375 (DIDECASNPCAAGGTCVDQVDGFECICPEQWVGATCQ). In terms of domain architecture, EGF-like 6; calcium-binding spans 377 to 413 (DANECEGKPCLNAFSCKNLIGGYYCDCLPGWKGANCH). The EGF-like 7; calcium-binding domain maps to 415 to 450 (NINDCHGQCQHGGTCKDLVNGYQCVCPRGFGGRHCE). EGF-like domains are found at residues 452–488 (EYYK…PLCE) and 490–527 (DVDL…KNCS). Asn-525 carries N-linked (GlcNAc...) asparagine glycosylation. Residues 529 to 589 (PRETCPGGAC…DSGFTGTYCH (61 aa)) form the EGF-like 10; atypical domain. The N-linked (GlcNAc...) asparagine glycan is linked to Asn-574. The region spanning 591–627 (NIDDCMGQPCRNGGTCIDEVDSFACFCPSGWEGELCD) is the EGF-like 11; calcium-binding domain. The EGF-like 12; calcium-binding domain occupies 629–665 (NPNDCLPDPCHSRGRCYDLVNDFYCVCDDGWKDKTCH). 2 consecutive EGF-like domains span residues 667–703 (REFQ…STCT) and 706–742 (KNSS…RTCT). Asn-707 carries N-linked (GlcNAc...) asparagine glycosylation. Disulfide bonds link Cys-710–Cys-721, Cys-715–Cys-730, Cys-732–Cys-741, Cys-748–Cys-759, Cys-753–Cys-768, Cys-770–Cys-779, Cys-786–Cys-797, Cys-791–Cys-806, and Cys-808–Cys-817. Residues 744 to 780 (NTNDCNPLPCYNGGICVDGVNWFRCECAPGFAGPDCR) form the EGF-like 15; calcium-binding domain. The region spanning 782–818 (NIDECQSSPCAYGATCVDEINGYRCSCPPGRSGPRCQ) is the EGF-like 16; calcium-binding domain. The N-linked (GlcNAc...) asparagine glycan is linked to Asn-1015. The chain crosses the membrane as a helical span at residues 1038–1058 (GLLVPVLCSVFSVLWLACMVI). Over 1059 to 1202 (CVWWTRKRRK…TKDVRCAGRE (144 aa)) the chain is Cytoplasmic. 3 stretches are compositionally biased toward basic and acidic residues: residues 1070–1080 (RERSRLPRDES), 1147–1159 (LSRG…RSRE), and 1185–1202 (VDNR…AGRE). Residues 1070 to 1202 (RERSRLPRDE…TKDVRCAGRE (133 aa)) are disordered. Ser-1080 carries the phosphoserine modification.

It is found in the membrane. Its function is as follows. Putative Notch ligand involved in the mediation of Notch signaling. May have a role in neurogenesis in the peripheral nervous system, limb development and in the adult brain. The chain is Protein jagged-2 (Jag2) from Rattus norvegicus (Rat).